Consider the following 642-residue polypeptide: Extracellular metalloproteinase 5 (642 aa).

The first 19 residues, 1–19 (MHGLLLAAGLLSLPLHVLA), serve as a signal peptide directing secretion. The propeptide occupies 20–246 (HPQPSTTTSL…VHNVVDYVAH (227 aa)). Asn287 carries an N-linked (GlcNAc...) asparagine glycan. Position 430 (His430) interacts with Zn(2+). Glu431 is a catalytic residue. His434 is a binding site for Zn(2+). 2 N-linked (GlcNAc...) asparagine glycosylation sites follow: Asn595 and Asn624.

Belongs to the peptidase M36 family. Zn(2+) is required as a cofactor.

The protein localises to the secreted. Secreted metalloproteinase that allows assimilation of proteinaceous substrates and probably acts as a virulence factor. This chain is Extracellular metalloproteinase 5 (MEP5), found in Arthroderma gypseum (strain ATCC MYA-4604 / CBS 118893) (Microsporum gypseum).